The primary structure comprises 174 residues: Glycine-rich protein 5 (174 aa).

The N-terminal stretch at 1-22 (MASKSLFLVALLVGSFAFTSFA) is a signal peptide.

Mostly expressed in immature seed pods, and, to a lower extent, in stems and leaves. Present in phloem and epiderm in leaves, stems, flowers and fruits.

Its subcellular location is the vacuole. In terms of biological role, involved in organ growth by promoting cell elongation processes. The chain is Glycine-rich protein 5 from Arabidopsis thaliana (Mouse-ear cress).